Here is a 119-residue protein sequence, read N- to C-terminus: Large ribosomal subunit protein uL14 (119 aa).

It belongs to the universal ribosomal protein uL14 family. Part of the 50S ribosomal subunit. Forms a cluster with proteins L3 and L19. In the 70S ribosome, L14 and L19 interact and together make contacts with the 16S rRNA in bridges B5 and B8.

Functionally, binds to 23S rRNA. Forms part of two intersubunit bridges in the 70S ribosome. The chain is Large ribosomal subunit protein uL14 from Anaplasma phagocytophilum (strain HZ).